We begin with the raw amino-acid sequence, 81 residues long: Consomatin Le1 (81 aa).

An N-terminal signal peptide occupies residues Met1–Gly22. A propeptide spanning residues Gly23–Arg57 is cleaved from the precursor. Glu58 carries the post-translational modification 4-carboxyglutamate. The cysteines at positions 62 and 67 are disulfide-linked. A D-tryptophan modification is found at Trp64. At Pro69 the chain carries 4-hydroxyproline. A propeptide spanning residues Leu71–Asp81 is cleaved from the precursor.

It belongs to the conotoxin C superfamily. Consomatin family. Expressed by the venom duct.

Its subcellular location is the secreted. Moderately activates human somatostatin receptors (SSTR) with a preferential activation of SSTR1 and SSTR4. In vivo, does not cause behavioral changes in mice within a few minutes of intracranial injection, but causes a progressive loss of movement thereafter. Four to five hours after injection, mice recover, even with the highest dose tested. Shows antinociception and antihyperalgesia activities in two mouse models of acute pain, most probably by acting outside the central nervous system. The protein is Consomatin Le1 of Conus lenavati (Cone snail).